The primary structure comprises 206 residues: Small ribosomal subunit protein uS4 (206 aa).

Positions 18–44 are disordered; sequence NIWGRPKSPVNRREYGPGQHGQRRKGK. An S4 RNA-binding domain is found at 94-157; it reads RRLDAVVYRA…KQLAVVLEAV (64 aa).

Belongs to the universal ribosomal protein uS4 family. In terms of assembly, part of the 30S ribosomal subunit. Contacts protein S5. The interaction surface between S4 and S5 is involved in control of translational fidelity.

In terms of biological role, one of the primary rRNA binding proteins, it binds directly to 16S rRNA where it nucleates assembly of the body of the 30S subunit. Functionally, with S5 and S12 plays an important role in translational accuracy. The sequence is that of Small ribosomal subunit protein uS4 from Jannaschia sp. (strain CCS1).